The following is a 336-amino-acid chain: Formimidoylglutamase (336 aa).

Positions 129, 160, 162, 164, 257, and 259 each coordinate Mn(2+).

It belongs to the arginase family. Mn(2+) serves as cofactor.

The enzyme catalyses N-formimidoyl-L-glutamate + H2O = formamide + L-glutamate. It participates in amino-acid degradation; L-histidine degradation into L-glutamate; L-glutamate from N-formimidoyl-L-glutamate (hydrolase route): step 1/1. In terms of biological role, catalyzes the conversion of N-formimidoyl-L-glutamate to L-glutamate and formamide. This chain is Formimidoylglutamase, found in Vibrio vulnificus (strain YJ016).